The sequence spans 455 residues: MSPLECSECFGDQLLHRTYTWHLTLHSRPNFTRKRDTRSESLEIPINVVLPQRGTAEPFLRLHNLYPTPRCARQAALPRLSRRVVSQHSYPLNRFSSVPLDPMERPTSQADLELDYNPPRVQLSDEMFVFQDGRWVSENCRLQSPYFSPSSSFHHKLHHKRLAKECLLQENKTLREENRALREENRMLRKENKILQVFWEEHQAALGRDDSRASSPLLHKDNASSLEAMKKETALQAHRGRENSTLQLLREENRALQQLLEQRKAYWAQPDEKAASTEEIKPISSPHEEPHGLLPDPGPGLPSPFEEPKGLPAPPDDSKTLRALREMVSTLSAQPGEEVGKGGPGLPDGSQSLELLREMNQALQALREENQSLQVLRDENRLLQEENRALHALREEHRLFQEENKALWENNKLKLQQKLVIDTVTEVTARMEMLIEELYAFMPAKSKDPKKPSRV.

8 positions are modified to phosphoserine: Ser-41, Ser-86, Ser-89, Ser-97, Ser-124, Ser-144, Ser-148, and Ser-150. A coiled-coil region spans residues 160–197 (KRLAKECLLQENKTLREENRALREENRMLRKENKILQV). 2 positions are modified to phosphoserine: Ser-211 and Ser-225. A coiled-coil region spans residues 240-266 (GRENSTLQLLREENRALQQLLEQRKAY). The disordered stretch occupies residues 267–318 (WAQPDEKAASTEEIKPISSPHEEPHGLLPDPGPGLPSPFEEPKGLPAPPDDS). Basic and acidic residues predominate over residues 270-291 (PDEKAASTEEIKPISSPHEEPH). A phosphoserine mark is found at Ser-276 and Ser-332. The stretch at 350 to 421 (SQSLELLREM…KLKLQQKLVI (72 aa)) forms a coiled coil.

It belongs to the chibby family. SPERT subfamily. Homodimer. Binds to NEK1.

This Bos taurus (Bovine) protein is Protein chibby homolog 2 (CBY2).